Here is a 307-residue protein sequence, read N- to C-terminus: Probable aspartoacylase (307 aa).

H13 and E16 together coordinate Zn(2+). Substrate contacts are provided by residues R55 and 62 to 63 (NR). Position 105 (H105) interacts with Zn(2+). Residues E163 and Y276 each contribute to the substrate site.

Belongs to the AspA/AstE family. Aspartoacylase subfamily. The cofactor is Zn(2+).

The catalysed reaction is an N-acyl-L-aspartate + H2O = a carboxylate + L-aspartate. In Prochlorococcus marinus (strain SARG / CCMP1375 / SS120), this protein is Probable aspartoacylase.